The primary structure comprises 238 residues: Mitochondrial inner membrane protease atp23 (238 aa).

An a divalent metal cation-binding site is contributed by His-137. Residue Glu-138 is part of the active site. His-141 serves as a coordination point for a divalent metal cation.

Belongs to the peptidase M76 family.

The protein localises to the mitochondrion inner membrane. Has a dual role in the assembly of mitochondrial ATPase. Acts as a protease that removes N-terminal residues of mitochondrial ATPase CF(0) subunit 6 at the intermembrane space side. Also involved in the correct assembly of the membrane-embedded ATPase CF(0) particle, probably mediating association of subunit 6 with the subunit 9 ring. The polypeptide is Mitochondrial inner membrane protease atp23 (atp23) (Aspergillus oryzae (strain ATCC 42149 / RIB 40) (Yellow koji mold)).